A 315-amino-acid chain; its full sequence is Fucose-specific lectin (315 aa).

6 tandem repeats follow at residues 2–53, 54–103, 104–155, 156–207, 208–260, and 261–315. The 6 X approximate tandem repeats stretch occupies residues 2–315; the sequence is STPGAQQVLF…QLGRSALPPA (314 aa). 16 residues coordinate alpha-L-fucose: arginine 25, glutamate 37, tryptophan 44, arginine 73, glutamate 85, tryptophan 94, glycine 98, arginine 126, glutamate 138, tryptophan 146, threonine 150, arginine 177, glutamine 189, tryptophan 198, arginine 230, and glutamine 242. 3 residues coordinate Zn(2+): cysteine 244, aspartate 246, and histidine 252. Alpha-L-fucose is bound by residues arginine 282 and glutamate 296.

It belongs to the fungal fucose-specific lectin family. As to quaternary structure, homodimer.

In terms of biological role, multispecific lectin that is able to recognize L-fucose in all possible linkages. These could be found not only in decomposed plant matter in soil, which is the natural environment for A.fumigatus, but also in various epitopes on human tissues. Mediates binding of A.fumigatus conidia to airway mucin in a fucose dependent manner. Stimulates IL-8 production by human bronchial cells in a dose-dependent manner, contributing to the inflammatory response observed upon the exposure of a patient to A.fumigatus, and thus might be an important virulence factor involved in an early stage of A.fumigatus infection. In Aspergillus fumigatus (strain ATCC MYA-4609 / CBS 101355 / FGSC A1100 / Af293) (Neosartorya fumigata), this protein is Fucose-specific lectin.